We begin with the raw amino-acid sequence, 268 residues long: Putative cysteine-rich repeat secretory protein 5 (268 aa).

Positions 1–24 (MTGINTHFAVALFCFFSFSLRAMS) are cleaved as a signal peptide. Gnk2-homologous domains lie at 27–129 (SQML…NVSF) and 135–248 (DVPS…ISAL).

Belongs to the cysteine-rich repeat secretory protein family.

It is found in the secreted. The polypeptide is Putative cysteine-rich repeat secretory protein 5 (CRRSP5) (Arabidopsis thaliana (Mouse-ear cress)).